The chain runs to 310 residues: Glutaminase (310 aa).

The substrate site is built by serine 66, asparagine 117, glutamate 161, asparagine 168, tyrosine 192, tyrosine 244, and valine 262.

This sequence belongs to the glutaminase family. In terms of assembly, homotetramer.

The catalysed reaction is L-glutamine + H2O = L-glutamate + NH4(+). This chain is Glutaminase, found in Desulfovibrio desulfuricans (strain ATCC 27774 / DSM 6949 / MB).